Reading from the N-terminus, the 614-residue chain is 1-deoxy-D-xylulose-5-phosphate synthase (614 aa).

Residues histidine 74 and 115-117 contribute to the thiamine diphosphate site; that span reads AHS. Aspartate 146 serves as a coordination point for Mg(2+). Residues 147 to 148, asparagine 175, tyrosine 282, and glutamate 363 contribute to the thiamine diphosphate site; that span reads GA. Asparagine 175 is a binding site for Mg(2+).

Belongs to the transketolase family. DXPS subfamily. In terms of assembly, homodimer. The cofactor is Mg(2+). Requires thiamine diphosphate as cofactor.

It catalyses the reaction D-glyceraldehyde 3-phosphate + pyruvate + H(+) = 1-deoxy-D-xylulose 5-phosphate + CO2. The protein operates within metabolic intermediate biosynthesis; 1-deoxy-D-xylulose 5-phosphate biosynthesis; 1-deoxy-D-xylulose 5-phosphate from D-glyceraldehyde 3-phosphate and pyruvate: step 1/1. Functionally, catalyzes the acyloin condensation reaction between C atoms 2 and 3 of pyruvate and glyceraldehyde 3-phosphate to yield 1-deoxy-D-xylulose-5-phosphate (DXP). In Nitrosomonas europaea (strain ATCC 19718 / CIP 103999 / KCTC 2705 / NBRC 14298), this protein is 1-deoxy-D-xylulose-5-phosphate synthase.